A 450-amino-acid chain; its full sequence is MEPRVGNKFRLGRKIGSGSFGEIYLGTNIHTNEELAIKLENVKTKHPQLLYESKLYRILQGGTGVPNVKWFGVEGDYNVLVMDLLGPSLEDLFNFCSRKLSLKSVLMLADQMINRVEFFHSKSFLHRDLKPDNFLMGLGRRANQVYIIDFGLAKKYRDSTTHQHIPYRENKNLTGTARYASMNTHLGIEQSRRDDLESLGYILMYFLKGSLPWQGLKAGTKKQKYERISEKKVSTSIEALCRGYPSEFASYFHYCRSLRFDDKPDYAYLKRIFRDLFIREGFQFDYVFDWTILKYQQSQLTAPPSRALNPAVGTSAALPPGISNIDRYTGEEEGRPHMESSRRRVSGALDNSGNISNQPTSSSARDSMIPSSSLFAQSAGSSRRVTAVSGSRDNFPGSEELLQRSRTGDVSRGVIPRNSPGEAGKSTRRHYESVVKGIDNLQVSDEHHPH.

The Protein kinase domain occupies 9 to 278 (FRLGRKIGSG…LKRIFRDLFI (270 aa)). ATP contacts are provided by residues 15–23 (IGSGSFGEI) and Lys38. Asp128 serves as the catalytic Proton acceptor. Residues 311–450 (AVGTSAALPP…LQVSDEHHPH (140 aa)) are disordered. A compositionally biased stretch (basic and acidic residues) spans 328–342 (YTGEEEGRPHMESSR). A compositionally biased stretch (polar residues) spans 349-365 (LDNSGNISNQPTSSSAR). The span at 371–382 (SSSLFAQSAGSS) shows a compositional bias: low complexity.

The protein belongs to the protein kinase superfamily. CK1 Ser/Thr protein kinase family. Casein kinase I subfamily. Monomer. Autophosphorylated. Expressed in flowers.

It is found in the cytoplasm. The protein localises to the cell junction. The protein resides in the plasmodesma. It catalyses the reaction L-seryl-[protein] + ATP = O-phospho-L-seryl-[protein] + ADP + H(+). It carries out the reaction L-threonyl-[protein] + ATP = O-phospho-L-threonyl-[protein] + ADP + H(+). Its function is as follows. Casein kinases are operationally defined by their preferential utilization of acidic proteins such as caseins as substrates. It can phosphorylate a large number of proteins. This chain is Casein kinase 1-like protein 1, found in Arabidopsis thaliana (Mouse-ear cress).